A 705-amino-acid chain; its full sequence is Polyribonucleotide nucleotidyltransferase (705 aa).

D487 and D493 together coordinate Mg(2+). The region spanning 554-613 (PKILTMKINPDKIRDVIGPSGKQINKIIEDTGVKIDIEQDGTIFISSTEEDMNQKAKKII) is the KH domain. In terms of domain architecture, S1 motif spans 623 to 691 (GQLYLGKVKR…KQGRVNLSRK (69 aa)).

It belongs to the polyribonucleotide nucleotidyltransferase family. It depends on Mg(2+) as a cofactor.

The protein resides in the cytoplasm. It carries out the reaction RNA(n+1) + phosphate = RNA(n) + a ribonucleoside 5'-diphosphate. Involved in mRNA degradation. Catalyzes the phosphorolysis of single-stranded polyribonucleotides processively in the 3'- to 5'-direction. In Bacillus pumilus (strain SAFR-032), this protein is Polyribonucleotide nucleotidyltransferase.